We begin with the raw amino-acid sequence, 532 residues long: Collagen alpha-1(XXIII) chain (532 aa).

The Cytoplasmic segment spans residues 1–23 (MGAGERAAGGGGTQDPGAGCGAR). Residues 24–45 (ALGALCLLLSVGSATACLLLGA) form a helical; Signal-anchor for type II membrane protein membrane-spanning segment. At 46-532 (QAAALHGRVA…GLPVPGCWHK (487 aa)) the chain is on the extracellular side. The tract at residues 102–532 (PSECICPPGP…GLPVPGCWHK (431 aa)) is disordered. 4 consecutive Collagen-like domains span residues 108–163 (PPGP…FGPR), 173–232 (GPPG…PGKK), 242–297 (GLPG…EQGD), and 313–372 (GPPG…MGLS). Composition is skewed to low complexity over residues 129-145 (QSGR…DGKP) and 157-172 (PGDF…DGAA). Composition is skewed to pro residues over residues 174 to 184 (PPGPPGPPGAR), 241 to 250 (PGLPGPPGPK), and 314 to 326 (PPGP…PPGI). Composition is skewed to basic and acidic residues over residues 342-354 (DGEK…KGDP) and 380-393 (PKGE…DHLQ). Over residues 403 to 414 (PGPPGPPGPPGP) the composition is skewed to pro residues. Collagen-like domains follow at residues 404–452 (GPPG…GPPG) and 455–514 (GLPG…PGLD). 2 stretches are compositionally biased toward basic and acidic residues: residues 427–441 (DGAK…ERGP) and 478–495 (RGEK…ERGV).

As to quaternary structure, homotrimer. In terms of processing, undergoes proteolytic cleavage by furin protease to yield a 60 kDa soluble form that forms a homotrimer and exhibits a low affinity interaction with heparin.

It is found in the cell membrane. This Rattus norvegicus (Rat) protein is Collagen alpha-1(XXIII) chain (Col23a1).